Here is a 530-residue protein sequence, read N- to C-terminus: Membrane-bound lytic murein transglycosylase F (530 aa).

The signal sequence occupies residues 1 to 27 (MTPFAYKLPIRALWLGLLSLLLVGCQI). A non-LT domain region spans residues 28-279 (DSEPKSELEK…SLEEKYIGHI (252 aa)). The segment at 280–530 (GAFDYVDTRA…SAKPSTESKN (251 aa)) is LT domain. Glu-324 is an active-site residue. The interval 505–530 (ALESESLENSESSAEPSAKPSTESKN) is disordered. Low complexity predominate over residues 513-530 (NSESSAEPSAKPSTESKN).

This sequence in the N-terminal section; belongs to the bacterial solute-binding protein 3 family. The protein in the C-terminal section; belongs to the transglycosylase Slt family.

The protein resides in the cell outer membrane. It carries out the reaction Exolytic cleavage of the (1-&gt;4)-beta-glycosidic linkage between N-acetylmuramic acid (MurNAc) and N-acetylglucosamine (GlcNAc) residues in peptidoglycan, from either the reducing or the non-reducing ends of the peptidoglycan chains, with concomitant formation of a 1,6-anhydrobond in the MurNAc residue.. In terms of biological role, murein-degrading enzyme that degrades murein glycan strands and insoluble, high-molecular weight murein sacculi, with the concomitant formation of a 1,6-anhydromuramoyl product. Lytic transglycosylases (LTs) play an integral role in the metabolism of the peptidoglycan (PG) sacculus. Their lytic action creates space within the PG sacculus to allow for its expansion as well as for the insertion of various structures such as secretion systems and flagella. In Vibrio cholerae serotype O1 (strain ATCC 39541 / Classical Ogawa 395 / O395), this protein is Membrane-bound lytic murein transglycosylase F.